Here is an 86-residue protein sequence, read N- to C-terminus: MVRHPYSVQTQLSTEAKAIWRSMQQQETNLLANLTTNDARDNSKDFQNSKVGAAATSRDEGCNCPIIGEIVISCYWLFEIPPLISE.

Retina-specific.

This is an uncharacterized protein from Homo sapiens (Human).